Here is a 41-residue protein sequence, read N- to C-terminus: Giant hemoglobin AI chain (41 aa).

Residues 2 to 41 form the Globin domain; sequence DCGMLQRIKVKQQWASVYSSGIAREDFGEAIWKAVFALAP.

It belongs to the globin family. Giant hemoglobin is composed of four heme-containing chains (AI to AIV), and two linker chains (AV and AVI).

This is Giant hemoglobin AI chain from Lamellibrachia sp. (Deep-sea giant tube worm).